Reading from the N-terminus, the 467-residue chain is ATP synthase subunit beta (467 aa).

156–163 contributes to the ATP binding site; the sequence is GGAGVGKT.

The protein belongs to the ATPase alpha/beta chains family. F-type ATPases have 2 components, CF(1) - the catalytic core - and CF(0) - the membrane proton channel. CF(1) has five subunits: alpha(3), beta(3), gamma(1), delta(1), epsilon(1). CF(0) has three main subunits: a(1), b(2) and c(9-12). The alpha and beta chains form an alternating ring which encloses part of the gamma chain. CF(1) is attached to CF(0) by a central stalk formed by the gamma and epsilon chains, while a peripheral stalk is formed by the delta and b chains.

It is found in the cell inner membrane. The catalysed reaction is ATP + H2O + 4 H(+)(in) = ADP + phosphate + 5 H(+)(out). Its function is as follows. Produces ATP from ADP in the presence of a proton gradient across the membrane. The catalytic sites are hosted primarily by the beta subunits. This chain is ATP synthase subunit beta, found in Ralstonia nicotianae (strain ATCC BAA-1114 / GMI1000) (Ralstonia solanacearum).